Reading from the N-terminus, the 559-residue chain is Formate--tetrahydrofolate ligase (559 aa).

An ATP-binding site is contributed by 68-75 (TPAGEGKT).

The protein belongs to the formate--tetrahydrofolate ligase family.

The catalysed reaction is (6S)-5,6,7,8-tetrahydrofolate + formate + ATP = (6R)-10-formyltetrahydrofolate + ADP + phosphate. It functions in the pathway one-carbon metabolism; tetrahydrofolate interconversion. This chain is Formate--tetrahydrofolate ligase, found in Mesorhizobium japonicum (strain LMG 29417 / CECT 9101 / MAFF 303099) (Mesorhizobium loti (strain MAFF 303099)).